The sequence spans 153 residues: Large ribosomal subunit protein uL22 (153 aa).

It belongs to the universal ribosomal protein uL22 family. As to quaternary structure, part of the 50S ribosomal subunit.

Its function is as follows. This protein binds specifically to 23S rRNA. It makes multiple contacts with different domains of the 23S rRNA in the assembled 50S subunit and ribosome. The globular domain of the protein is located near the polypeptide exit tunnel on the outside of the subunit, while an extended beta-hairpin is found that lines the wall of the exit tunnel in the center of the 70S ribosome. This chain is Large ribosomal subunit protein uL22, found in Methanoculleus marisnigri (strain ATCC 35101 / DSM 1498 / JR1).